We begin with the raw amino-acid sequence, 191 residues long: Adenylate kinase (191 aa).

10–15 (GAGKGT) is an ATP binding site. The NMP stretch occupies residues 30 to 59 (STGDMLRAARTSGTEMGNLVAGVMDRGELV). AMP is bound by residues threonine 31, arginine 36, 57–59 (ELV), 83–86 (GFPR), and glutamine 90. The interval 124 to 140 (NRAKEAAAAGQPVRADD) is LID. Arginine 125 provides a ligand contact to ATP. Residues arginine 137 and arginine 148 each contribute to the AMP site. Glycine 176 serves as a coordination point for ATP.

It belongs to the adenylate kinase family. Monomer.

It is found in the cytoplasm. The catalysed reaction is AMP + ATP = 2 ADP. It functions in the pathway purine metabolism; AMP biosynthesis via salvage pathway; AMP from ADP: step 1/1. Its function is as follows. Catalyzes the reversible transfer of the terminal phosphate group between ATP and AMP. Plays an important role in cellular energy homeostasis and in adenine nucleotide metabolism. This chain is Adenylate kinase, found in Jannaschia sp. (strain CCS1).